The sequence spans 296 residues: GTPase Era (296 aa).

The Era-type G domain maps to 7 to 174; it reads RTGFVAIVGR…LEEIAQRLPE (168 aa). Positions 15 to 22 are G1; that stretch reads GRPNVGKS. 15 to 22 is a GTP binding site; the sequence is GRPNVGKS. Residues 41-45 are G2; the sequence is QTTRH. Residues 62 to 65 form a G3 region; that stretch reads DTPG. GTP-binding positions include 62 to 66 and 123 to 126; these read DTPGF and SKID. A G4 region spans residues 123 to 126; sequence SKID. Positions 153–155 are G5; that stretch reads VSA. One can recognise a KH type-2 domain in the interval 197–281; that stretch reads VREKIFRLVG…HLEVYIKVRK (85 aa).

It belongs to the TRAFAC class TrmE-Era-EngA-EngB-Septin-like GTPase superfamily. Era GTPase family. Monomer.

The protein localises to the cytoplasm. Its subcellular location is the cell inner membrane. In terms of biological role, an essential GTPase that binds both GDP and GTP, with rapid nucleotide exchange. Plays a role in 16S rRNA processing and 30S ribosomal subunit biogenesis and possibly also in cell cycle regulation and energy metabolism. This is GTPase Era from Bordetella avium (strain 197N).